Reading from the N-terminus, the 128-residue chain is MEKVSIVCFFFFLLFGSGYGGLPPFWRATVVTMTNLIGGPPLTIHCKSKQDDLGIHVVPFKQEYHFKFQPNLWKSTLFFCSFQWDSQFKSFDIYDAQRDQGICDDCQWEIKPDGPCRLGKKAKCFPWK.

The first 20 residues, 1-20, serve as a signal peptide directing secretion; sequence MEKVSIVCFFFFLLFGSGYG.

Belongs to the plant self-incompatibility (S1) protein family.

The protein resides in the secreted. This Arabidopsis thaliana (Mouse-ear cress) protein is S-protein homolog 5.